Here is a 479-residue protein sequence, read N- to C-terminus: Glutamate--tRNA ligase (479 aa).

Residues 11–21 (PSPTGYLHIGG) carry the 'HIGH' region motif. Cysteine 108, cysteine 110, cysteine 135, and glutamate 137 together coordinate Zn(2+). The 'KMSKS' region signature appears at 250–254 (KLSKR). Lysine 253 lines the ATP pocket.

It belongs to the class-I aminoacyl-tRNA synthetase family. Glutamate--tRNA ligase type 1 subfamily. In terms of assembly, monomer. Zn(2+) is required as a cofactor.

The protein resides in the cytoplasm. The enzyme catalyses tRNA(Glu) + L-glutamate + ATP = L-glutamyl-tRNA(Glu) + AMP + diphosphate. Its function is as follows. Catalyzes the attachment of glutamate to tRNA(Glu) in a two-step reaction: glutamate is first activated by ATP to form Glu-AMP and then transferred to the acceptor end of tRNA(Glu). This is Glutamate--tRNA ligase from Myxococcus xanthus (strain DK1622).